Here is a 336-residue protein sequence, read N- to C-terminus: Probable allantoicase (336 aa).

This sequence belongs to the allantoicase family.

It carries out the reaction allantoate + H2O = (S)-ureidoglycolate + urea. The protein operates within nitrogen metabolism; (S)-allantoin degradation; (S)-ureidoglycolate from allantoate (aminidohydrolase route): step 1/1. The protein is Probable allantoicase of Acinetobacter baumannii (strain ACICU).